The sequence spans 33 residues: Protamine-1B (33 aa).

Residues 1-33 (PRRRRRRSSSRPIRRRRPRRVSRRRRRGGRRRR) form a disordered region.

In terms of tissue distribution, testis.

It is found in the nucleus. Its subcellular location is the chromosome. In terms of biological role, protamines substitute for histones in the chromatin of sperm during the haploid phase of spermatogenesis. They compact sperm DNA into a highly condensed, stable and inactive complex. The chain is Protamine-1B from Oncorhynchus mykiss (Rainbow trout).